Consider the following 644-residue polypeptide: Chaperone protein DnaK (644 aa).

Disordered stretches follow at residues 490-533 (QEEA…ELDD) and 570-644 (EELQ…EDDA). The span at 492-513 (EAEKHKEEDEARRERIEARNEA) shows a compositional bias: basic and acidic residues. Positions 523 to 533 (LLEENEEELDD) are enriched in acidic residues. Over residues 588–622 (GPGGAGGAAGAGPGGMGGMGGAAGPGGAGGAGPGG) the composition is skewed to gly residues. A compositionally biased stretch (acidic residues) spans 624-644 (DADDEEYVDADFEDVDDEDDA).

It belongs to the heat shock protein 70 family.

Functionally, acts as a chaperone. The sequence is that of Chaperone protein DnaK from Halorubrum lacusprofundi (strain ATCC 49239 / DSM 5036 / JCM 8891 / ACAM 34).